We begin with the raw amino-acid sequence, 389 residues long: Acetate kinase (389 aa).

Residue asparagine 7 coordinates Mg(2+). Lysine 14 is a binding site for ATP. A substrate-binding site is contributed by arginine 88. Aspartate 145 acts as the Proton donor/acceptor in catalysis. ATP is bound by residues 205-209 (HLGNG), 279-281 (DLR), and 324-328 (GIGEN). Residue glutamate 375 participates in Mg(2+) binding.

It belongs to the acetokinase family. As to quaternary structure, homodimer. Mg(2+) serves as cofactor. Mn(2+) is required as a cofactor.

It localises to the cytoplasm. It catalyses the reaction acetate + ATP = acetyl phosphate + ADP. Its pathway is metabolic intermediate biosynthesis; acetyl-CoA biosynthesis; acetyl-CoA from acetate: step 1/2. Catalyzes the formation of acetyl phosphate from acetate and ATP. Can also catalyze the reverse reaction. This is Acetate kinase from Sulfurimonas denitrificans (strain ATCC 33889 / DSM 1251) (Thiomicrospira denitrificans (strain ATCC 33889 / DSM 1251)).